Consider the following 549-residue polypeptide: mRNA-capping enzyme subunit beta (549 aa).

At Ser-2 the chain carries N-acetylserine. Residue Ser-15 is modified to Phosphoserine. The tract at residues 30-169 (LQKLSEAANG…QGNEGNIASN (140 aa)) is disordered. Over residues 86–96 (DDEETDTDDEM) the composition is skewed to acidic residues. Residue Ser-124 is modified to Phosphoserine. Positions 135–157 (AKLEKPSDDSIHQNSKSDEEQRI) are enriched in basic and acidic residues. The active-site N6-GMP-lysine intermediate is Lys-223.

It belongs to the fungal TPase family. As to quaternary structure, heterodimer. The mRNA-capping enzyme is composed of two separate chains alpha and beta, respectively a mRNA guanylyltransferase and an mRNA 5'-triphosphate monophosphatase. The cofactor is Mg(2+).

It is found in the nucleus. The catalysed reaction is a 5'-end triphospho-ribonucleoside in mRNA + H2O = a 5'-end diphospho-ribonucleoside in mRNA + phosphate + H(+). First step of mRNA capping. Converts the 5'-triphosphate end of a nascent mRNA chain into a diphosphate end. The chain is mRNA-capping enzyme subunit beta (CET1) from Saccharomyces cerevisiae (strain ATCC 204508 / S288c) (Baker's yeast).